The following is a 296-amino-acid chain: Glucokinase (296 aa).

Belongs to the ROK (NagC/XylR) family. As to quaternary structure, homodimer. A divalent metal cation is required as a cofactor.

It catalyses the reaction D-glucose + ATP = D-glucose 6-phosphate + ADP + H(+). Its function is as follows. Catalyzes the phosphorylation of D-glucose to D-glucose 6-phosphate using ATP as the phosphate donor. Has a broad hexose specificity, and in addition to glucose, which shows the highest catalytic efficiency, it can also phosphorylate fructose, mannose, galactose and sorbitol. Can also use CTP, GTP or UTP as phosphoryl donor. This Pyrobaculum calidifontis (strain DSM 21063 / JCM 11548 / VA1) protein is Glucokinase.